Reading from the N-terminus, the 650-residue chain is Chaperone protein HtpG (650 aa).

The tract at residues 1–349 is a; substrate-binding; it reads MSKTVKKFET…SSDLPLNVSR (349 aa). A b region spans residues 350 to 566; it reads EILQEDVQIK…EHGLNANMER (217 aa). Residues 567-650 are c; the sequence is ILRAMNQTVP…VADGKAAAGE (84 aa).

The protein belongs to the heat shock protein 90 family. In terms of assembly, homodimer.

It localises to the cytoplasm. Functionally, molecular chaperone. Has ATPase activity. In Geobacter sulfurreducens (strain ATCC 51573 / DSM 12127 / PCA), this protein is Chaperone protein HtpG.